A 333-amino-acid polypeptide reads, in one-letter code: Transcription initiation factor IIB (333 aa).

The TFIIB-type zinc-finger motif lies at 33–64 (EVYRCPICGNDKFIYNYERGEVVCIVCGAVVQ). 4 residues coordinate Zn(2+): C37, C40, C56, and C59. 2 repeat units span residues 149 to 232 (QELE…LREL) and 243 to 324 (LYIS…ELAK).

The protein belongs to the TFIIB family.

In terms of biological role, stabilizes TBP binding to an archaeal box-A promoter. Also responsible for recruiting RNA polymerase II to the pre-initiation complex (DNA-TBP-TFIIB). The chain is Transcription initiation factor IIB from Pyrobaculum neutrophilum (strain DSM 2338 / JCM 9278 / NBRC 100436 / V24Sta) (Thermoproteus neutrophilus).